Reading from the N-terminus, the 327-residue chain is Phenylalanine--tRNA ligase alpha subunit (327 aa).

Glu252 is a binding site for Mg(2+).

It belongs to the class-II aminoacyl-tRNA synthetase family. Phe-tRNA synthetase alpha subunit type 1 subfamily. Tetramer of two alpha and two beta subunits. The cofactor is Mg(2+).

Its subcellular location is the cytoplasm. It carries out the reaction tRNA(Phe) + L-phenylalanine + ATP = L-phenylalanyl-tRNA(Phe) + AMP + diphosphate + H(+). The sequence is that of Phenylalanine--tRNA ligase alpha subunit from Shigella boydii serotype 18 (strain CDC 3083-94 / BS512).